We begin with the raw amino-acid sequence, 397 residues long: MASEGITEIDSGLIETNYDNVVYKFDDLNLKPNIVRGIFGYGYETPSAIQQRAILPITEGRDVLAQAQSGTGKTATFTISALQRINENEKATQALILAPTRELALQIKNVITAIGLYLKVTVHASIGGTSMSDDIEAFRSGVQIVVGTPGRVLDMIERRYFKTDKVKMFILDEADEMLSSGFKEQIYNIFRLLPETTQIVLLSATMPQDVLEVTTKFMNNPVRILVKKDELTLEGIKQFYINVELEDYKFDCLCDLYDSISVTQAVIFCNTRSKVEFLTNKLREQHFTVSAIHADLPQAERDTIMKEFRSGSSRILISTDLLARGIDVQQVSLVINYDLPANKENYIHRIGRGGRFGRKGVAINFVTDRDVGMMREIEKFYSTQIEEMPADIGALFA.

The Q motif motif lies at 23 to 51; it reads YKFDDLNLKPNIVRGIFGYGYETPSAIQQ. One can recognise a Helicase ATP-binding domain in the interval 54 to 224; sequence ILPITEGRDV…TKFMNNPVRI (171 aa). An ATP-binding site is contributed by 67–74; that stretch reads AQSGTGKT. Positions 172–175 match the DEAD box motif; it reads DEAD. The Helicase C-terminal domain occupies 235–396; sequence GIKQFYINVE…EMPADIGALF (162 aa).

This sequence belongs to the DEAD box helicase family. eIF4A subfamily. In terms of assembly, component of the eIF4F complex, which composition varies with external and internal environmental conditions. It is composed of at least eIF4A, eIF4E and eIF4G.

Its subcellular location is the cytoplasm. It catalyses the reaction ATP + H2O = ADP + phosphate + H(+). In terms of biological role, ATP-dependent RNA helicase which is a subunit of the eIF4F complex involved in cap recognition and is required for mRNA binding to ribosome. In the current model of translation initiation, eIF4A unwinds RNA secondary structures in the 5'-UTR of mRNAs which is necessary to allow efficient binding of the small ribosomal subunit, and subsequent scanning for the initiator codon. This Candida albicans (strain SC5314 / ATCC MYA-2876) (Yeast) protein is ATP-dependent RNA helicase eIF4A (TIF1).